The sequence spans 234 residues: Peptidase E (234 aa).

Catalysis depends on charge relay system residues Ser-123, Asp-138, and His-160.

This sequence belongs to the peptidase S51 family.

Its subcellular location is the cytoplasm. The catalysed reaction is Dipeptidase E catalyzes the hydrolysis of dipeptides Asp-|-Xaa. It does not act on peptides with N-terminal Glu, Asn or Gln, nor does it cleave isoaspartyl peptides.. In terms of biological role, hydrolyzes dipeptides containing N-terminal aspartate residues. May play a role in allowing the cell to use peptide aspartate to spare carbon otherwise required for the synthesis of the aspartate family of amino acids. The sequence is that of Peptidase E from Actinobacillus pleuropneumoniae serotype 3 (strain JL03).